We begin with the raw amino-acid sequence, 365 residues long: Caffeic acid 3-O-methyltransferase (365 aa).

130–136 lines the substrate pocket; the sequence is MNQDKVL. The substrate binding stretch occupies residues 162-180; that stretch reads AFDYHGTDPRFNKVFNKGM. Positions 208, 231, 251, 252, and 265 each coordinate S-adenosyl-L-methionine. The active-site Proton acceptor is the His269.

It belongs to the class I-like SAM-binding methyltransferase superfamily. Cation-independent O-methyltransferase family. COMT subfamily. Homodimer.

The catalysed reaction is (E)-caffeate + S-adenosyl-L-methionine = (E)-ferulate + S-adenosyl-L-homocysteine + H(+). The protein operates within aromatic compound metabolism; phenylpropanoid biosynthesis. Catalyzes the conversion of caffeic acid to ferulic acid and of 5-hydroxyferulic acid to sinapic acid. The resulting products may subsequently be converted to the corresponding alcohols that are incorporated into lignins. In Rosa chinensis (China rose), this protein is Caffeic acid 3-O-methyltransferase (COMT1).